Reading from the N-terminus, the 61-residue chain is Beta-toxin Tce4 (61 aa).

The LCN-type CS-alpha/beta domain maps to 1-61; it reads KEGYLMDHEG…KVWEYATNRC (61 aa). Intrachain disulfides connect Cys-11–Cys-61, Cys-15–Cys-37, Cys-23–Cys-42, and Cys-27–Cys-44. Cysteine amide is present on Cys-61.

Belongs to the long (4 C-C) scorpion toxin superfamily. Sodium channel inhibitor family. Beta subfamily. In terms of tissue distribution, expressed by the venom gland.

It localises to the secreted. Functionally, beta toxins bind voltage-independently at site-4 of sodium channels (Nav) and shift the voltage of activation toward more negative potentials thereby affecting sodium channel activation and promoting spontaneous and repetitive firing. This is Beta-toxin Tce4 from Tityus cerroazul (Scorpion).